Here is a 504-residue protein sequence, read N- to C-terminus: Acetyltransferase pyiB (504 aa).

The signal sequence occupies residues 1–18; sequence MGFLSAGGLWASLFRARI. Asparagine 84 carries N-linked (GlcNAc...) asparagine glycosylation. Histidine 181 functions as the Proton acceptor in the catalytic mechanism. N-linked (GlcNAc...) asparagine glycans are attached at residues asparagine 413 and asparagine 467.

Belongs to the plant acyltransferase family.

It participates in mycotoxin biosynthesis. Its function is as follows. Acetyltransferase; part of the gene cluster that mediates the biosynthesis of the mycotoxin pyrichalasin H, a tyrosine-derived cytochalasan that inhibits the growth of rice seedlings, but also inhibits lymphocyte capping and actin polymerization and alters cell morphology. Pyrichalasin H is indicated as the responsible agent for the genus-specific pathogenicity of M.grisea toward crabgrass. The first step in the pathway is catalyzed by the O-methyltransferase pyiA which methylates free tyrosine to generate the precursor O-methyltyrosine. The hybrid PKS-NRPS pyiS, assisted by the enoyl reductase pyiC, are responsible for fusion of the O-methyltyrosine precursor and the polyketide backbone. The polyketide synthase module (PKS) of pyiS is responsible for the synthesis of the polyketide backbone and the downstream nonribosomal peptide synthetase (NRPS) amidates the carboxyl end of the polyketide with the O-methyltyrosine precursor. As the NRPS A-domain demonstrates substrate tolerance, pyiS can also use phenylalanine, tyrosine and even para-chlorophenylalanine as amino acid precursor, which leads to the production of novel cytochalasans, including halogenated cytochalasans. Because pyiS lacks a designated enoylreductase (ER) domain, the required activity is provided the enoyl reductase pyiC. Reduction by the hydrolyase pyiE leads to 1,5-dihydropyrrolone, which is substrate for dehydration and intra-molecular Diels-Alder cyclization by the Diels-Alderase pyiF to yield the required isoindolone-fused macrocycle. The tailoring cytochrome P450 monooxygenases piyD and piyG catalyze the hydroxylation at C-18 and C-7, respectivily, whereas the short-chain dehydrogenase/reductase pyiH reduces the carbonyl at C-21 in preparation for the transfer of an acetyl group by the acetyltransferase pyiB. These 3 reactions whose order is not clear yet, lead to the production of O-methylpyrichalasin J, a deacetylated pyrichalasin H. Finally, pyiB to converts O-methylpyrichalasin J into the final product pyrichalasin H via acetylation of C-21. This Pyricularia grisea (Crabgrass-specific blast fungus) protein is Acetyltransferase pyiB.